Here is a 287-residue protein sequence, read N- to C-terminus: Putative DNA-3-methyladenine glycosylase YfjP (287 aa).

The Proton acceptor role is filled by Asp242.

The protein belongs to the alkylbase DNA glycosidase AlkA family.

The enzyme catalyses Hydrolysis of alkylated DNA, releasing 3-methyladenine, 3-methylguanine, 7-methylguanine and 7-methyladenine.. Functionally, hydrolysis of the deoxyribose N-glycosidic bond to excise 3-methyladenine, 3-methylguanine, 7-methylguanine, O2-methylthymine, and O2-methylcytosine from the damaged DNA polymer formed by alkylation lesions. The polypeptide is Putative DNA-3-methyladenine glycosylase YfjP (yfjP) (Bacillus subtilis (strain 168)).